The sequence spans 143 residues: Putative pre-16S rRNA nuclease (143 aa).

It belongs to the YqgF nuclease family.

Its subcellular location is the cytoplasm. Its function is as follows. Could be a nuclease involved in processing of the 5'-end of pre-16S rRNA. In Lactobacillus gasseri (strain ATCC 33323 / DSM 20243 / BCRC 14619 / CIP 102991 / JCM 1131 / KCTC 3163 / NCIMB 11718 / NCTC 13722 / AM63), this protein is Putative pre-16S rRNA nuclease.